The sequence spans 1485 residues: Formin BNR1 (1485 aa).

Disordered regions lie at residues 65-88 (HLPP…PTLH), 226-248 (HDDS…PTET), and 549-575 (ANTS…SFDE). One can recognise a GBD/FH3 domain in the interval 110–636 (NQIPPEEIVD…HVTNESRVIG (527 aa)). The span at 231–248 (TSKLSIESGGSSGAPTET) shows a compositional bias: polar residues. Residues 553–564 (LEEDELTPELED) show a composition bias toward acidic residues. A coiled-coil region spans residues 660–734 (ARRAVAESKM…EQLQSPNNTA (75 aa)). The tract at residues 746–874 (GNGTVASLKD…GFMNASAPPP (129 aa)) is disordered. An FH2 domain is found at 953-1368 (VVPSIRPKNK…YEIRKKILED (416 aa)). Coiled coils occupy residues 1240–1312 (HNIS…GELN) and 1351–1382 (QREE…ESAE). Positions 1447–1471 (LKRRMTTRKRTTDGETSPKSEQFMS) are disordered.

The protein belongs to the formin homology family. BNI1 subfamily. As to quaternary structure, interacts with IQG1.

It localises to the bud neck. The protein resides in the cell septum. In terms of biological role, may organize microtubules by mediating spindle positioning and movement in the budding process. Required for cytokinesis and the maintenance of polarized hyphal growth. This is Formin BNR1 (BNR1) from Candida albicans (strain SC5314 / ATCC MYA-2876) (Yeast).